The primary structure comprises 494 residues: Glutamate--tRNA ligase (494 aa).

A 'HIGH' region motif is present at residues 10–20 (PSPTGDPHVGT). Zn(2+) is bound by residues Cys107, Cys109, Cys134, and His136. A 'KMSKS' region motif is present at residues 251-255 (KLSKR). Residue Lys254 coordinates ATP.

This sequence belongs to the class-I aminoacyl-tRNA synthetase family. Glutamate--tRNA ligase type 1 subfamily. In terms of assembly, monomer. The cofactor is Zn(2+).

It is found in the cytoplasm. The catalysed reaction is tRNA(Glu) + L-glutamate + ATP = L-glutamyl-tRNA(Glu) + AMP + diphosphate. Its function is as follows. Catalyzes the attachment of glutamate to tRNA(Glu) in a two-step reaction: glutamate is first activated by ATP to form Glu-AMP and then transferred to the acceptor end of tRNA(Glu). The polypeptide is Glutamate--tRNA ligase (Pseudomonas paraeruginosa (strain DSM 24068 / PA7) (Pseudomonas aeruginosa (strain PA7))).